The primary structure comprises 1310 residues: Adhesion G protein-coupled receptor A3 (1310 aa).

The first 27 residues, 1-27 (MEPPPPLLLLPLALLALLWGGERGAAA), serve as a signal peptide directing secretion. The region spanning 28–70 (LPAGCKHDGRARGTGRAAAAAEGKVVCSSLELAQVLPPDTLPN) is the LRRNT domain. Residues 28–747 (LPAGCKHDGR…TELYTPAASL (720 aa)) are Extracellular-facing. N-linked (GlcNAc...) asparagine glycans are attached at residues N70 and N87. LRR repeat units lie at residues 71–92 (RTVT…SFSG), 95–116 (LLER…AFWG), 119–140 (SLKR…VFRG), and 143–164 (NLVR…TFDY). N148, N195, N290, N321, N422, N442, N581, N641, N676, and N717 each carry an N-linked (GlcNAc...) asparagine glycan. In terms of domain architecture, LRRCT spans 176–226 (EYLLCDCNILWMHRWVKERNITVRDTRCVYPKSLQAQPVTGVKQELLTCDP). Positions 231–329 (PSFYMTPSHR…GNNTRTVDIV (99 aa)) constitute an Ig-like domain. C253 and C313 form a disulfide bridge. One can recognise a GAIN-B domain in the interval 572–739 (LDKQLSFKCN…AVLMDLTGTE (168 aa)). Residues 690–739 (AAQWDFDLLNGQGGWKSDGCCILYSDENITTIQCGSLGNYAVLMDLTGTE) form a GPS region. C709 and C723 are oxidised to a cystine. Residues 748-768 (LHPVVYTTAITLLLCLLAVII) form a helical membrane-spanning segment. At 769–785 (SYMYHHSLIRISLKSWH) the chain is on the cytoplasmic side. The helical transmembrane segment at 786 to 806 (MLVNLCFHILLTCVVFVGGIT) threads the bilayer. Residues 807-815 (QTRNASVCQ) are Extracellular-facing. N810 carries N-linked (GlcNAc...) asparagine glycosylation. The chain crosses the membrane as a helical span at residues 816-836 (AVGIILHYSTLATVLWVGVTA). The Cytoplasmic portion of the chain corresponds to 837 to 865 (RNIYKQVTKKAKRCQDPDEPPAPPRPMLR). A helical membrane pass occupies residues 866 to 886 (FYLIGGGIPIIVCGITAAANI). Topologically, residues 887–908 (KNYGSRPSAPYCWMAWEPSLGA) are extracellular. The helical transmembrane segment at 909 to 929 (FYGPASFITFVNCMYFLSIFI) threads the bilayer. Residues 930–985 (QLKRHPERKYELKEPTEEQQRLAANENGEINHQDSMSLSLISTSTLENEHSFQSQL) lie on the Cytoplasmic side of the membrane. The helical transmembrane segment at 986-1006 (LGASLTLLLYVILWMFGAMAV) threads the bilayer. The Extracellular segment spans residues 1007 to 1013 (SLYYPLD). The helical transmembrane segment at 1014–1034 (LVFSFFFGATCLSFSAFMMVH) threads the bilayer. The Cytoplasmic segment spans residues 1035-1310 (HCINREDVRL…TGLWKHETTV (276 aa)). 3 disordered regions span residues 1065 to 1084 (PPNS…SSAE), 1187 to 1208 (VEGS…GHSR), and 1221 to 1264 (YNPP…ADLE). The segment covering 1222–1239 (NPPQQDSSDACSTLPKSS) has biased composition (polar residues). A PDZ-binding motif is present at residues 1308–1310 (TTV).

Belongs to the G-protein coupled receptor 2 family. Adhesion G-protein coupled receptor (ADGR) subfamily. As to quaternary structure, interacts (via PDZ-binding motif) with DLG1. In terms of tissue distribution, expressed by spermatogonial progenitor cells located within the outer cell layer of the seminiferous tubule and by multipotent adult spermatogonial-derived stem cells.

It localises to the membrane. Functionally, orphan receptor that may have a role in planar cell polarity pathway. The protein is Adhesion G protein-coupled receptor A3 (Adgra3) of Mus musculus (Mouse).